A 1044-amino-acid polypeptide reads, in one-letter code: Multiple epidermal growth factor-like domains protein 11 (1044 aa).

The signal sequence occupies residues 1 to 19 (MVLSLTGLIAFSFLQATLA). The Extracellular segment spans residues 20-848 (LNPEDPNVCS…SPALGAERHS (829 aa)). An EMI domain is found at 24 to 101 (DPNVCSHWES…YYESGDFCIP (78 aa)). 14 disulfide bridges follow: cysteine 28/cysteine 89, cysteine 54/cysteine 63, cysteine 88/cysteine 99, cysteine 103/cysteine 118, cysteine 120/cysteine 129, cysteine 146/cysteine 154, cysteine 148/cysteine 161, cysteine 163/cysteine 172, cysteine 185/cysteine 197, cysteine 191/cysteine 204, cysteine 206/cysteine 215, cysteine 228/cysteine 240, cysteine 234/cysteine 247, and cysteine 249/cysteine 258. EGF-like domains are found at residues 95–130 (SGDF…PDCS), 143–173 (SNRC…WRCE), 181–216 (HGKG…VYCE), 224–259 (HGAH…AVCA), 267–302 (FGQN…DRCQ), 310–345 (FGFQ…PRCQ), 399–434 (YGDG…EVCA), 442–477 (YGPN…LDCT), and 490–520 (NESC…DTCE). The N-linked (GlcNAc...) asparagine glycan is linked to asparagine 270. 15 disulfide bridges follow: cysteine 271/cysteine 283, cysteine 277/cysteine 290, cysteine 292/cysteine 301, cysteine 314/cysteine 326, cysteine 320/cysteine 333, cysteine 335/cysteine 344, cysteine 403/cysteine 415, cysteine 409/cysteine 422, cysteine 424/cysteine 433, cysteine 446/cysteine 458, cysteine 452/cysteine 465, cysteine 467/cysteine 476, cysteine 493/cysteine 501, cysteine 495/cysteine 508, and cysteine 510/cysteine 519. A glycan (N-linked (GlcNAc...) asparagine) is linked at asparagine 531. EGF-like domains are found at residues 571–606 (WGPN…PLCQ), 659–694 (FGQD…KDCS), 707–737 (FHAC…LFCT), 750–780 (GRVC…QHCE), and 788–823 (FGYG…IRCD). 15 disulfides stabilise this stretch: cysteine 575/cysteine 587, cysteine 581/cysteine 594, cysteine 596/cysteine 605, cysteine 663/cysteine 675, cysteine 669/cysteine 682, cysteine 684/cysteine 693, cysteine 710/cysteine 718, cysteine 712/cysteine 725, cysteine 727/cysteine 736, cysteine 753/cysteine 761, cysteine 755/cysteine 768, cysteine 770/cysteine 779, cysteine 792/cysteine 804, cysteine 798/cysteine 811, and cysteine 813/cysteine 822. A helical membrane pass occupies residues 849–869 (VGAVTGIMLLLFLIVVLLGLF). Residues 870 to 1044 (AWHRRRQKEK…ANGPSQDKQS (175 aa)) lie on the Cytoplasmic side of the membrane. Positions 1023–1044 (GHYDLLPVRQSPANGPSQDKQS) are disordered. Residues 1033-1044 (SPANGPSQDKQS) are compositionally biased toward polar residues.

Belongs to the MEGF family. As to quaternary structure, homomer. Does not interact with MEGF10.

The protein resides in the cell membrane. The protein localises to the basolateral cell membrane. Its function is as follows. May regulate the mosaic spacing of specific neuron subtypes in the retina through homotypic retinal neuron repulsion. Mosaics provide a mechanism to distribute each cell type evenly across the retina, ensuring that all parts of the visual field have access to a full set of processing elements. The chain is Multiple epidermal growth factor-like domains protein 11 (MEGF11) from Homo sapiens (Human).